We begin with the raw amino-acid sequence, 109 residues long: MFGKGGMGNMMKQAQQMQERMQKLQEEIANMEVTGESGAGLVKVTITGSHSVRRVDIDESLMEDDKEMLEDLIAAAFNDAARRVEETQKEKMAGVTGGMQLPPGMKMPF.

Disordered regions lie at residues 1–22 and 88–109; these read MFGK…ERMQ and QKEK…KMPF. Residues 9–18 show a composition bias toward low complexity; the sequence is NMMKQAQQMQ.

Belongs to the YbaB/EbfC family. In terms of assembly, homodimer.

It localises to the cytoplasm. It is found in the nucleoid. Functionally, binds to DNA and alters its conformation. May be involved in regulation of gene expression, nucleoid organization and DNA protection. The sequence is that of Nucleoid-associated protein VS_0917 from Vibrio atlanticus (strain LGP32) (Vibrio splendidus (strain Mel32)).